Here is a 379-residue protein sequence, read N- to C-terminus: DNA replication and repair protein RecF (379 aa).

ATP is bound at residue 30–37 (GKNAQGKT).

This sequence belongs to the RecF family.

It localises to the cytoplasm. Its function is as follows. The RecF protein is involved in DNA metabolism; it is required for DNA replication and normal SOS inducibility. RecF binds preferentially to single-stranded, linear DNA. It also seems to bind ATP. The chain is DNA replication and repair protein RecF from Ligilactobacillus salivarius (strain UCC118) (Lactobacillus salivarius).